We begin with the raw amino-acid sequence, 55 residues long: Large ribosomal subunit protein bL33 (55 aa).

Belongs to the bacterial ribosomal protein bL33 family.

In Zymomonas mobilis subsp. mobilis (strain ATCC 31821 / ZM4 / CP4), this protein is Large ribosomal subunit protein bL33.